A 146-amino-acid chain; its full sequence is Transcriptional regulator MraZ (146 aa).

SpoVT-AbrB domains lie at 5 to 47 (EYYH…TITD) and 76 to 119 (SIQV…AKEK).

This sequence belongs to the MraZ family. In terms of assembly, forms oligomers.

The protein localises to the cytoplasm. It is found in the nucleoid. This is Transcriptional regulator MraZ from Dictyoglomus thermophilum (strain ATCC 35947 / DSM 3960 / H-6-12).